The chain runs to 109 residues: METRATLRGVRLSVDKGRLVADLIRGKKVDQALNILNFTQKKAAGIIKKVVESAIANAEHNDGADIDELKVKTIYVEQGATLKRFSARAKGRGNSISKPTCHVYVVVGN.

This sequence belongs to the universal ribosomal protein uL22 family. Part of the 50S ribosomal subunit.

Its function is as follows. This protein binds specifically to 23S rRNA; its binding is stimulated by other ribosomal proteins, e.g. L4, L17, and L20. It is important during the early stages of 50S assembly. It makes multiple contacts with different domains of the 23S rRNA in the assembled 50S subunit and ribosome. The globular domain of the protein is located near the polypeptide exit tunnel on the outside of the subunit, while an extended beta-hairpin is found that lines the wall of the exit tunnel in the center of the 70S ribosome. This is Large ribosomal subunit protein uL22 from Polaromonas sp. (strain JS666 / ATCC BAA-500).